We begin with the raw amino-acid sequence, 475 residues long: 3-isopropylmalate dehydratase large subunit (475 aa).

The [4Fe-4S] cluster site is built by Cys-347, Cys-407, and Cys-410. Residues 418 to 442 are disordered; that stretch reads LAPGERSASTSNRNFEGRQGKGGRT.

This sequence belongs to the aconitase/IPM isomerase family. LeuC type 1 subfamily. Heterodimer of LeuC and LeuD. The cofactor is [4Fe-4S] cluster.

It catalyses the reaction (2R,3S)-3-isopropylmalate = (2S)-2-isopropylmalate. Its pathway is amino-acid biosynthesis; L-leucine biosynthesis; L-leucine from 3-methyl-2-oxobutanoate: step 2/4. Its function is as follows. Catalyzes the isomerization between 2-isopropylmalate and 3-isopropylmalate, via the formation of 2-isopropylmaleate. The chain is 3-isopropylmalate dehydratase large subunit from Streptomyces griseus subsp. griseus (strain JCM 4626 / CBS 651.72 / NBRC 13350 / KCC S-0626 / ISP 5235).